The chain runs to 162 residues: Glutathione peroxidase-like peroxiredoxin GPX5 (162 aa).

C38 is subject to S-selanylcysteine. N87 is a catalytic residue.

The protein belongs to the glutathione peroxidase family. Post-translationally, cys-87 is S-selanylated when selenium levels are high. S-selanylation may increase or be important for glutathione peroxidase activity.

The protein resides in the cytoplasm. The enzyme catalyses 2 glutathione + H2O2 = glutathione disulfide + 2 H2O. It catalyses the reaction a hydroperoxide + [thioredoxin]-dithiol = an alcohol + [thioredoxin]-disulfide + H2O. Has thioredoxin peroxidase activity. May also have glutathione peroxidase activity, although this activity is controversial. Protects cells against reactive oxygen species, which may include photooxidative stress, hydrogen peroxide and organic hydroperoxides. In Chlamydomonas reinhardtii (Chlamydomonas smithii), this protein is Glutathione peroxidase-like peroxiredoxin GPX5.